The sequence spans 233 residues: Leucyl/phenylalanyl-tRNA--protein transferase (233 aa).

This sequence belongs to the L/F-transferase family.

The protein resides in the cytoplasm. The enzyme catalyses N-terminal L-lysyl-[protein] + L-leucyl-tRNA(Leu) = N-terminal L-leucyl-L-lysyl-[protein] + tRNA(Leu) + H(+). The catalysed reaction is N-terminal L-arginyl-[protein] + L-leucyl-tRNA(Leu) = N-terminal L-leucyl-L-arginyl-[protein] + tRNA(Leu) + H(+). It catalyses the reaction L-phenylalanyl-tRNA(Phe) + an N-terminal L-alpha-aminoacyl-[protein] = an N-terminal L-phenylalanyl-L-alpha-aminoacyl-[protein] + tRNA(Phe). Its function is as follows. Functions in the N-end rule pathway of protein degradation where it conjugates Leu, Phe and, less efficiently, Met from aminoacyl-tRNAs to the N-termini of proteins containing an N-terminal arginine or lysine. In Laribacter hongkongensis (strain HLHK9), this protein is Leucyl/phenylalanyl-tRNA--protein transferase.